Here is a 136-residue protein sequence, read N- to C-terminus: uncharacterized protein (136 aa).

The next 2 helical transmembrane spans lie at 25–47 (ILKA…PHAF) and 78–97 (ITGA…LLTA).

The protein localises to the cell membrane. This is an uncharacterized protein from Bacillus subtilis (strain 168).